We begin with the raw amino-acid sequence, 546 residues long: 2-isopropylmalate synthase (546 aa).

The Pyruvate carboxyltransferase domain maps to 8–271 (ILIFDTTLRD…NSFFGRSSDS (264 aa)). Mn(2+) is bound by residues Asp17, His208, His210, and Asn244. Residues 408–546 (QLSHVQVSCG…EKKVFSNPKN (139 aa)) are regulatory domain.

Belongs to the alpha-IPM synthase/homocitrate synthase family. LeuA type 1 subfamily. As to quaternary structure, homodimer. Requires Mn(2+) as cofactor.

Its subcellular location is the cytoplasm. The catalysed reaction is 3-methyl-2-oxobutanoate + acetyl-CoA + H2O = (2S)-2-isopropylmalate + CoA + H(+). Its pathway is amino-acid biosynthesis; L-leucine biosynthesis; L-leucine from 3-methyl-2-oxobutanoate: step 1/4. In terms of biological role, catalyzes the condensation of the acetyl group of acetyl-CoA with 3-methyl-2-oxobutanoate (2-ketoisovalerate) to form 3-carboxy-3-hydroxy-4-methylpentanoate (2-isopropylmalate). This is 2-isopropylmalate synthase from Prochlorococcus marinus (strain MIT 9515).